Here is a 710-residue protein sequence, read N- to C-terminus: Effector protein AvrPphD (710 aa).

Residues methionine 1–proline 15 show a composition bias toward polar residues. Disordered regions lie at residues methionine 1–arginine 36, isoleucine 136–serine 155, and serine 173–serine 207.

It localises to the secreted. In terms of biological role, effector protein involved in non-host recognition and able to elicit hypersensitive response (HR). This chain is Effector protein AvrPphD (avrPphD), found in Pseudomonas savastanoi pv. phaseolicola (Pseudomonas syringae pv. phaseolicola).